Here is a 104-residue protein sequence, read N- to C-terminus: Large ribosomal subunit protein eL30 (104 aa).

This sequence belongs to the eukaryotic ribosomal protein eL30 family.

This Sulfolobus acidocaldarius (strain ATCC 33909 / DSM 639 / JCM 8929 / NBRC 15157 / NCIMB 11770) protein is Large ribosomal subunit protein eL30 (rpl30e).